The sequence spans 485 residues: Cobyric acid synthase (485 aa).

The GATase cobBQ-type domain occupies 249–437 (HLKIRVPVWQ…WHGLFSQPSA (189 aa)). Cys-330 serves as the catalytic Nucleophile. His-429 is an active-site residue.

This sequence belongs to the CobB/CobQ family. CobQ subfamily.

The protein operates within cofactor biosynthesis; adenosylcobalamin biosynthesis. Functionally, catalyzes amidations at positions B, D, E, and G on adenosylcobyrinic A,C-diamide. NH(2) groups are provided by glutamine, and one molecule of ATP is hydrogenolyzed for each amidation. This is Cobyric acid synthase from Saccharophagus degradans (strain 2-40 / ATCC 43961 / DSM 17024).